The primary structure comprises 332 residues: NADH-quinone oxidoreductase subunit H (332 aa).

A run of 9 helical transmembrane segments spans residues 4–24 (FAFF…IFAS), 44–64 (IGPD…MIKL), 78–98 (FIFA…LAAI), 120–140 (VALL…FLGG), 165–185 (VGAL…LVDI), 194–214 (FSWL…ALFI), 255–275 (IAGA…FWII), 279–299 (IMMI…RAAF), and 312–332 (YLIL…AVLL).

It belongs to the complex I subunit 1 family. As to quaternary structure, NDH-1 is composed of 14 different subunits. Subunits NuoA, H, J, K, L, M, N constitute the membrane sector of the complex.

The protein resides in the cell inner membrane. The catalysed reaction is a quinone + NADH + 5 H(+)(in) = a quinol + NAD(+) + 4 H(+)(out). Its function is as follows. NDH-1 shuttles electrons from NADH, via FMN and iron-sulfur (Fe-S) centers, to quinones in the respiratory chain. The immediate electron acceptor for the enzyme in this species is believed to be ubiquinone. Couples the redox reaction to proton translocation (for every two electrons transferred, four hydrogen ions are translocated across the cytoplasmic membrane), and thus conserves the redox energy in a proton gradient. This subunit may bind ubiquinone. The protein is NADH-quinone oxidoreductase subunit H of Campylobacter jejuni subsp. jejuni serotype O:6 (strain 81116 / NCTC 11828).